We begin with the raw amino-acid sequence, 464 residues long: IAA-amino acid hydrolase ILR1-like 6 (464 aa).

An N-terminal signal peptide occupies residues 1-24; it reads MDNLRKLNLLSVSLTIIFVSLTIA. C175, H177, E211, H235, and H433 together coordinate Mn(2+).

The protein belongs to the peptidase M20 family.

The enzyme catalyses a jasmonyl-L-amino acid + H2O = a jasmonate + an L-alpha-amino acid. Functionally, hydrolyzes certain amino acid conjugates of the plant growth regulator indole-3-acetic acid (IAA). Also hydrolyzes amino acid conjugates of jasmonic acid and 12-hydroxy jasmonic acid. The protein is IAA-amino acid hydrolase ILR1-like 6 of Arabidopsis thaliana (Mouse-ear cress).